A 105-amino-acid polypeptide reads, in one-letter code: MNNEFLQTEEDIVRMLRTVYDPEIPVNVYDLGLIYNVDVGADGFVTVTMTLTAPNCPAADFIIEDVRMKVESVKGVKGVKIDLTFEPEWNKDMMSEEAMLELGFL.

Belongs to the Fe-S cluster assembly domain superfamily. MIP18-like family. Putative homodimer; may be disulfide-linked.

Iron binding protein that protects DNA from Fenton chemistry-mediated damage caused by hydrogen peroxide induced oxidative stress. May be involved in iron-sulfur cluster assembly. The protein is Fe-S protein maturation auxiliary factor PG_1777 of Porphyromonas gingivalis (strain ATCC BAA-308 / W83).